The primary structure comprises 478 residues: Zinc metalloproteinase/disintegrin (478 aa).

An N-terminal signal peptide occupies residues 1–20 (MIQVLLVTICLAVFPYQGSS). Residues 21 to 194 (KTLKSGNVND…KASQLNLTPE (174 aa)) constitute a propeptide that is removed on maturation. Glutamine 195 carries the post-translational modification Pyrrolidone carboxylic acid. A Peptidase M12B domain is found at 201–397 (RYIELVIVAD…RNPQCILNQP (197 aa)). Positions 204 and 288 each coordinate Ca(2+). 3 disulfides stabilise this stretch: cysteine 312–cysteine 392, cysteine 352–cysteine 376, and cysteine 354–cysteine 359. Histidine 337 contributes to the Zn(2+) binding site. Residue glutamate 338 is part of the active site. Positions 341 and 347 each coordinate Zn(2+). Positions 392 and 395 each coordinate Ca(2+). Residues 398 to 413 (LRTDTVSTPVSGNELL) constitute a propeptide that is removed on maturation. Residues 405-478 (TPVSGNELLQ…SDCPRNPYKD (74 aa)) form the Disintegrin domain. Disulfide bonds link cysteine 420/cysteine 443, cysteine 434/cysteine 440, cysteine 439/cysteine 464, and cysteine 452/cysteine 471. The short motif at 456-458 (VGD) is the Cell attachment site; atypical (VGD) element.

This sequence belongs to the venom metalloproteinase (M12B) family. P-II subfamily. P-IIe sub-subfamily. Monomer (metalloproteinase). Heterodimer; disulfide-linked (disintegrin). The cofactor is Zn(2+). In terms of tissue distribution, expressed by the venom gland.

Its subcellular location is the secreted. Its activity is regulated as follows. Fibrinolytic and caseinolytic activities are inhibited by Cd(2+), Cu(2+) and Co(2+) ions. Not inhibited by Mg(2+), Ca(2+) and Ba(2+). Also inhibited by EDTA, EGTA and 1,10-phenanthroline. Fibrinolytic and fibrinogenolytic metalloproteinase that hydrolyzes the Aalpha-chain and more slowly the Bbeta-chain of fibrin and fibrinogen. Its fibrinolytic activity is direct, without any plasminogen activation. Also hydrolyzes casein and B-chain of oxidized insulin. Inhibits ADP-induced and collagen-induced platelet aggregation. Shows low hemorrhagic activity. Cleaves the plasma proteinase inhibitors alpha(2)-macroglobulin (A2M) and pregnancy zone protein (PZP), and is inhibited by them. The metalloprotease has no strict P1-P1' specificity requirement. Hydrolysis at sites with a Pro residue at P1 is observed with bradykinin, substance P, PZP and alpha chain fibrinogen (FGA). Functionally, poor inhibitor of platelet aggregation. The disintegrin inhibits the adhesion of the alpha-4/beta-1 (ITGA4/ITGB1) integrin to VCAM-1. Inhibition on alpha-2b/beta-3 (ITGA2B/ITGB3) is low. The polypeptide is Zinc metalloproteinase/disintegrin (Macrovipera lebetinus (Levantine viper)).